The sequence spans 266 residues: 3-methyl-2-oxobutanoate hydroxymethyltransferase (266 aa).

2 residues coordinate Mg(2+): Asp43 and Asp82. 3-methyl-2-oxobutanoate-binding positions include 43 to 44 (DS), Asp82, and Lys110. Glu112 serves as a coordination point for Mg(2+). The active-site Proton acceptor is Glu179.

This sequence belongs to the PanB family. In terms of assembly, homodecamer; pentamer of dimers. It depends on Mg(2+) as a cofactor.

Its subcellular location is the cytoplasm. It catalyses the reaction 3-methyl-2-oxobutanoate + (6R)-5,10-methylene-5,6,7,8-tetrahydrofolate + H2O = 2-dehydropantoate + (6S)-5,6,7,8-tetrahydrofolate. Its pathway is cofactor biosynthesis; (R)-pantothenate biosynthesis; (R)-pantoate from 3-methyl-2-oxobutanoate: step 1/2. Catalyzes the reversible reaction in which hydroxymethyl group from 5,10-methylenetetrahydrofolate is transferred onto alpha-ketoisovalerate to form ketopantoate. This Psychrobacter arcticus (strain DSM 17307 / VKM B-2377 / 273-4) protein is 3-methyl-2-oxobutanoate hydroxymethyltransferase.